Consider the following 33-residue polypeptide: PRRRRSSSRPVRRRRRPRRVSRRRRRRGGRRRR.

Residues 1–33 are disordered; sequence PRRRRSSSRPVRRRRRPRRVSRRRRRRGGRRRR.

Testis.

It localises to the nucleus. The protein localises to the chromosome. Protamines substitute for histones in the chromatin of sperm during the haploid phase of spermatogenesis. They compact sperm DNA into a highly condensed, stable and inactive complex. This Oncorhynchus mykiss (Rainbow trout) protein is Protamine-1A.